Consider the following 401-residue polypeptide: MDPTRAPDFKPPSADEELIPPPDPESKIPKSIPIIPYVLADANSSIDAPFNIKRKKKHPKHHHHHHHSRKEGNDKKHQHIPLNQDDFQPLSAEVSSEDDDADFRSKERYGSDSTTESETRGVQKYQIADLEEVPHGIVRQARTLEDYEFPSHRLSKKLLDPNKLPLVIVACGSFSPITYLHLRMFEMALDAISEQTRFEVIGGYYSPVSDNYQKQGLAPSYHRVRMCELACERTSSWLMVDAWESLQPSYTRTAKVLDHFNHEINIKRGGVATVTGEKIGVKIMLLAGGDLIESMGEPNVWADADLHHILGNYGCLIVERTGSDVRSFLLSHDIMYEHRRNILIIKQLIYNDISSTKVRLFIRRAMSVQYLLPNSVIRYIQEHRLYVDQTEPVKQVLGNKE.

Disordered regions lie at residues 1 to 30 (MDPT…KIPK) and 48 to 123 (APFN…RGVQ). Over residues 52–69 (IKRKKKHPKHHHHHHHSR) the composition is skewed to basic residues. Residues serine 91, serine 95, serine 96, and serine 111 each carry the phosphoserine modification. Residues serine 173 and phenylalanine 174 each coordinate NAD(+). ATP is bound at residue histidine 181. NAD(+)-binding residues include threonine 253, glycine 288, aspartate 290, tryptophan 301, arginine 320, and asparagine 351. Residue 356 to 359 (TKVR) participates in ATP binding.

The protein belongs to the eukaryotic NMN adenylyltransferase family. Homotetramer. Ni(2+) is required as a cofactor.

It localises to the cytoplasm. The protein localises to the nucleus. It carries out the reaction beta-nicotinamide D-ribonucleotide + ATP + H(+) = diphosphate + NAD(+). The catalysed reaction is nicotinate beta-D-ribonucleotide + ATP + H(+) = deamido-NAD(+) + diphosphate. It participates in cofactor biosynthesis; NAD(+) biosynthesis; deamido-NAD(+) from nicotinate D-ribonucleotide: step 1/1. The protein operates within cofactor biosynthesis; NAD(+) biosynthesis; NAD(+) from nicotinamide D-ribonucleotide: step 1/1. Its function is as follows. Catalyzes the formation of NAD(+) from nicotinamide mononucleotide (NMN) and ATP. Can also use the deamidated form; nicotinic acid mononucleotide (NaMN) as substrate to form deamido-NAD(+) (NaAD). Key enzyme in both de novo and salvage pathways for NAD(+) biosynthesis. Predominantly acts in the salvage pathways via NMN. This chain is Nicotinamide/nicotinic acid mononucleotide adenylyltransferase 1, found in Saccharomyces cerevisiae (strain ATCC 204508 / S288c) (Baker's yeast).